Reading from the N-terminus, the 367-residue chain is Glutamate 5-kinase (367 aa).

An ATP-binding site is contributed by Lys-10. Substrate-binding residues include Ser-50, Asp-137, and Asn-149. ATP-binding positions include 169 to 170 (TD) and 211 to 217 (TGGMGTK). Residues 275-353 (AGEITVDAGA…QQIDAILGYE (79 aa)) form the PUA domain.

This sequence belongs to the glutamate 5-kinase family.

Its subcellular location is the cytoplasm. The catalysed reaction is L-glutamate + ATP = L-glutamyl 5-phosphate + ADP. It functions in the pathway amino-acid biosynthesis; L-proline biosynthesis; L-glutamate 5-semialdehyde from L-glutamate: step 1/2. Its function is as follows. Catalyzes the transfer of a phosphate group to glutamate to form L-glutamate 5-phosphate. This chain is Glutamate 5-kinase, found in Klebsiella pneumoniae subsp. pneumoniae (strain ATCC 700721 / MGH 78578).